We begin with the raw amino-acid sequence, 1479 residues long: Tyrosine-protein kinase BAZ1B (1479 aa).

Residues 20–126 (EPLFTIPHTQ…GEECDFEVGK (107 aa)) form the WAC domain. The interval 146–212 (EAVEKKSDGA…TSLKKGERKW (67 aa)) is disordered. Composition is skewed to basic and acidic residues over residues 148-165 (VEKKSDGACDSPSSDKEN) and 173-195 (LQKKETVVKEDEGRRESINDRAR). Phosphoserine occurs at positions 152, 158, and 161. Residues 207–213 (KGERKWA) carry the C motif motif. Thr266 bears the Phosphothreonine mark. Positions 302-333 (NPSTKRRNTGSPDRKPSKKPKRDSSSLSSPLN) are disordered. A phosphoserine mark is found at Ser325, Ser330, Ser345, Ser361, and Ser374. Disordered regions lie at residues 376 to 433 (NNNK…KTPK) and 448 to 472 (TQKMTRTPRSSGGVPRSSGKPHKHL). Basic residues predominate over residues 381–396 (HSFHIPKKGPAAKKPG). Residues 415 to 425 (GQKSTGNSKSP) show a composition bias toward polar residues. Residues 454–465 (TPRSSGGVPRSS) are compositionally biased toward low complexity. A coiled-coil region spans residues 537 to 587 (ASMSEEQRKEYLKKKRQELKERLREKAKERREREMLERLEKQKRFEDQELG). In terms of domain architecture, DDT spans 605-669 (NTLFGDVALV…LQTLLQDEIA (65 aa)). Residues Ser706, Ser709, and Ser717 each carry the phosphoserine modification. The stretch at 774–809 (SAELWKERLAVLKEENDKKRAEKQKRKEMEARNKEN) forms a coiled coil. Positions 789-813 (NDKKRAEKQKRKEMEARNKENGKEE) are disordered. Lys827 is covalently cross-linked (Glycyl lysine isopeptide (Lys-Gly) (interchain with G-Cter in SUMO1); alternate). Lys827 is covalently cross-linked (Glycyl lysine isopeptide (Lys-Gly) (interchain with G-Cter in SUMO2); alternate). Glycyl lysine isopeptide (Lys-Gly) (interchain with G-Cter in SUMO2) cross-links involve residues Lys854, Lys1043, Lys1089, and Lys1107. Residues 854–890 (KRKREIQERETKVRLEREAEEERMRKHKAAAEKAFQE) are a coiled coil. A PHD-type zinc finger spans residues 1184 to 1234 (NARCKVCRKKGEDDKLILCDECNKAFHLFCLRPALYEVPDGEWQCPACQPP). Residues 1231 to 1324 (CQPPTARRNS…SRPKDDPEVD (94 aa)) are disordered. Over residues 1254-1277 (SEGDESGEEEEEEEEEEEEEEDYE) the composition is skewed to acidic residues. The stretch at 1257-1284 (DESGEEEEEEEEEEEEEEDYEVAGLRLR) forms a coiled coil. The span at 1305 to 1316 (PGKKSHPARRSR) shows a compositional bias: basic residues. Ser1315 is subject to Phosphoserine. The residue at position 1331 (Lys1331) is an N6-acetyllysine. Residues 1335-1439 (RRQSLELQKC…QCLLALLQKH (105 aa)) form the Bromo domain. Residues Ser1338, Ser1464, Ser1466, and Ser1468 each carry the phosphoserine modification. Positions 1451-1479 (RKFPDRLADDEGDSDSESVGQSRGRRQKK) are disordered.

This sequence belongs to the WAL family. BAZ1B subfamily. Component of the WICH-1 ISWI chromatin remodeling complex, at least composed of SMARCA1 and BAZ1B/WSTF, which regulates the spacing of histone octamers on the DNA template to facilitate access to DNA. Within the WICH-1 ISWI chromatin remodeling complex interacts with SMARCA1; the interaction is direct. Component of the WICH-5 ISWI chromatin remodeling complex (also called the WICH complex), at least composed of SMARCA5/SNF2H and BAZ1B/WSTF, which regulates the spacing of histone octamers on the DNA template to facilitate access to DNA. Within the WICH-5 ISWI chromatin remodeling complex interacts with SMARCA5/SNF2H; the interaction is direct. Component of the B-WICH chromatin remodeling complex, at least composed of SMARCA5/SNF2H, BAZ1B/WSTF, SF3B1, DEK, MYO1C, ERCC6, MYBBP1A and DDX21. Within the B-WICH chromatin remodeling complex, interacts with SMARCA5/SNF2H, DDX21, DEK, MYBBP1A, SF3B1 and ERCC6. Interacts with MYO1C. Interacts with PCNA; the interaction is direct and is required for BAZ1B/WSTF binding to replication foci during S phase. Interacts with CDT1. Mn(2+) serves as cofactor.

It localises to the nucleus. The enzyme catalyses L-tyrosyl-[protein] + ATP = O-phospho-L-tyrosyl-[protein] + ADP + H(+). Its function is as follows. Atypical tyrosine-protein kinase that plays a central role in chromatin remodeling and acts as a transcription regulator. Involved in DNA damage response by phosphorylating 'Tyr-142' of histone H2AX (H2AXY142ph). H2AXY142ph plays a central role in DNA repair and acts as a mark that distinguishes between apoptotic and repair responses to genotoxic stress. Regulatory subunit of the ATP-dependent WICH-1 and WICH-5 ISWI chromatin remodeling complexes, which form ordered nucleosome arrays on chromatin and facilitate access to DNA during DNA-templated processes such as DNA replication, transcription, and repair. Both complexes regulate the spacing of nucleosomes along the chromatin and have the ability to slide mononucleosomes to the center of a DNA template. The WICH-1 ISWI chromatin remodeling complex has a lower ATP hydrolysis rate than the WICH-5 ISWI chromatin remodeling complex. The WICH-5 ISWI chromatin remodeling complex regulates the transcription of various genes, has a role in RNA polymerase I transcription. Within the B-WICH complex has a role in RNA polymerase III transcription. Mediates the recruitment of the WICH-5 ISWI chromatin remodeling complex to replication foci during DNA replication. The polypeptide is Tyrosine-protein kinase BAZ1B (Baz1b) (Mus musculus (Mouse)).